A 316-amino-acid chain; its full sequence is Olfactory receptor 1N2 (316 aa).

The Extracellular segment spans residues 1-28; that stretch reads MGKPGRVNQTTVSDFLLLGLSEWPEEQP. An N-linked (GlcNAc...) asparagine glycan is attached at Asn-8. A helical transmembrane segment spans residues 29–49; the sequence is LLFGIFLGMYLVTMVGNLLII. The Cytoplasmic segment spans residues 50–60; that stretch reads LAISSDPHLHT. Residues 61-81 traverse the membrane as a helical segment; it reads PMYFFLANLSLTDACFTSASI. The Extracellular segment spans residues 82–100; sequence PKMLANIHTQSQIISYSGC. An intrachain disulfide couples Cys-100 to Cys-182. A helical membrane pass occupies residues 101 to 121; that stretch reads LAQLYFLLMFGGLDNCLLAVM. At 122-145 the chain is on the cytoplasmic side; that stretch reads AYDRYVAICQPLHYSTSMSPQLCA. A helical transmembrane segment spans residues 146–166; that stretch reads LMLGVCWVLTNCPALMHTLLL. Over 167–199 the chain is Extracellular; the sequence is TRVAFCAQKAIPHFYCDPSALLKLACSDTHVNE. The helical transmembrane segment at 200–220 threads the bilayer; sequence LMIITMGLLFLTVPLLLIVFS. Residues 221–243 are Cytoplasmic-facing; the sequence is YVRIFWAVFVISSPGGRWKAFST. The chain crosses the membrane as a helical span at residues 244–264; that stretch reads CGSHLTVVLLFYGSLMGVYLL. Residues 265–274 lie on the Extracellular side of the membrane; the sequence is PPSTYSTERE. The helical transmembrane segment at 275–295 threads the bilayer; sequence SRAAVLYMVIIPTLNPFIYSL. Residues 296–316 are Cytoplasmic-facing; that stretch reads RNRDMKEALGKLFVSGKTFFL.

Belongs to the G-protein coupled receptor 1 family.

It localises to the membrane. Odorant receptor. This is Olfactory receptor 1N2 (OR1N2) from Homo sapiens (Human).